A 470-amino-acid polypeptide reads, in one-letter code: Retinoic acid receptor RXR-gamma (470 aa).

The tract at residues 1–145 (MHLATETAPS…NSPGALTKHI (145 aa)) is modulating. NR C4-type zinc fingers lie at residues 146–166 (CAIC…CEGC) and 182–206 (CRDS…YQKC). The nuclear receptor DNA-binding region spans 146–211 (CAICGDRSSG…RYQKCLAMGM (66 aa)). A hinge region spans residues 212 to 235 (KREAVQEERQRSREKSDTEAESTS). A compositionally biased stretch (basic and acidic residues) spans 217 to 229 (QEERQRSREKSDT). The tract at residues 217-242 (QEERQRSREKSDTEAESTSSTSEEMP) is disordered. The region spanning 238 to 466 (SEEMPVERIL…TFLMEMLETP (229 aa)) is the NR LBD domain.

Belongs to the nuclear hormone receptor family. NR2 subfamily. As to quaternary structure, homodimer. Heterodimer; with a rar molecule. Binds DNA preferentially as a rar/rxr heterodimer.

It is found in the nucleus. Functionally, receptor for retinoic acid. Retinoic acid receptors bind as heterodimers to their target response elements in response to their ligands, all-trans or 9-cis retinoic acid, and regulate gene expression in various biological processes. The rar/rxr heterodimers bind to the retinoic acid response elements (RARE) composed of tandem 5'-AGGTCA-3' sites known as DR1-DR5. The high affinity ligand for rxrs is 9-cis retinoic acid. The sequence is that of Retinoic acid receptor RXR-gamma (rxrg) from Xenopus laevis (African clawed frog).